We begin with the raw amino-acid sequence, 485 residues long: UDP-N-acetylmuramate--L-alanine ligase (485 aa).

ATP is bound at residue 112 to 118 (GTHGKTT).

The protein belongs to the MurCDEF family.

The protein resides in the cytoplasm. The enzyme catalyses UDP-N-acetyl-alpha-D-muramate + L-alanine + ATP = UDP-N-acetyl-alpha-D-muramoyl-L-alanine + ADP + phosphate + H(+). Its pathway is cell wall biogenesis; peptidoglycan biosynthesis. Functionally, cell wall formation. The protein is UDP-N-acetylmuramate--L-alanine ligase of Variovorax paradoxus (strain S110).